We begin with the raw amino-acid sequence, 290 residues long: Glutaredoxin domain-containing cysteine-rich protein 1 (290 aa).

The Glutaredoxin domain maps to 127–234; it reads LQQPSTDLEF…DILTKIERVQ (108 aa).

It belongs to the GRXCR1 family. Expressed at low levels in adult lung, brain and duodenum with moderate levels in testis. Highly expressed in fetal cochlea.

The protein resides in the cell projection. Its subcellular location is the stereocilium. It localises to the microvillus. It is found in the kinocilium. Functionally, may play a role in actin filament architecture in developing stereocilia of sensory cells. This is Glutaredoxin domain-containing cysteine-rich protein 1 (GRXCR1) from Homo sapiens (Human).